Here is a 249-residue protein sequence, read N- to C-terminus: MQSSLHALPVLQDNVLWIWVRGDEAAVVDPAVAEPVIDWLQQRQLQLSAVLQTHHHADHIGGTPGLLERWPDAAVVAAGADRSRIPFQTISVSDGDQVTVLGRSLQVLDVAAHTSAHIAFVIPEQEDPDLGPVVFCGDTLFSGGCGRLFEGTPADMHRALRRLSELPESTKVCCAHEYTEGNLLWAIQQQPQDAAIRQRYDAVVDLRRRGELSLPSSIGEERRSNLFMRAASAEELGRLRRHKDHWRAA.

Positions 54, 56, 58, 59, 113, 138, and 176 each coordinate Zn(2+).

It belongs to the metallo-beta-lactamase superfamily. Glyoxalase II family. In terms of assembly, monomer. The cofactor is Zn(2+).

The catalysed reaction is an S-(2-hydroxyacyl)glutathione + H2O = a 2-hydroxy carboxylate + glutathione + H(+). It participates in secondary metabolite metabolism; methylglyoxal degradation; (R)-lactate from methylglyoxal: step 2/2. In terms of biological role, thiolesterase that catalyzes the hydrolysis of S-D-lactoyl-glutathione to form glutathione and D-lactic acid. The protein is Hydroxyacylglutathione hydrolase of Parasynechococcus marenigrum (strain WH8102).